A 433-amino-acid chain; its full sequence is Tol-Pal system protein TolB (433 aa).

The signal sequence occupies residues 1–26 (MSLMTKLGFRALVASCLIAAGGAAHA).

It belongs to the TolB family. In terms of assembly, the Tol-Pal system is composed of five core proteins: the inner membrane proteins TolA, TolQ and TolR, the periplasmic protein TolB and the outer membrane protein Pal. They form a network linking the inner and outer membranes and the peptidoglycan layer.

The protein localises to the periplasm. Part of the Tol-Pal system, which plays a role in outer membrane invagination during cell division and is important for maintaining outer membrane integrity. This Burkholderia pseudomallei (strain 1710b) protein is Tol-Pal system protein TolB.